The following is a 195-amino-acid chain: ATP synthase subunit b (195 aa).

Residues 28–48 traverse the membrane as a helical segment; that stretch reads IFPNVYVLIAHVISLIFLLLL.

The protein belongs to the ATPase B chain family. As to quaternary structure, F-type ATPases have 2 components, F(1) - the catalytic core - and F(0) - the membrane proton channel. F(1) has five subunits: alpha(3), beta(3), gamma(1), delta(1), epsilon(1). F(0) has three main subunits: a(1), b(2) and c(10-14). The alpha and beta chains form an alternating ring which encloses part of the gamma chain. F(1) is attached to F(0) by a central stalk formed by the gamma and epsilon chains, while a peripheral stalk is formed by the delta and b chains.

The protein localises to the cell membrane. In terms of biological role, f(1)F(0) ATP synthase produces ATP from ADP in the presence of a proton or sodium gradient. F-type ATPases consist of two structural domains, F(1) containing the extramembraneous catalytic core and F(0) containing the membrane proton channel, linked together by a central stalk and a peripheral stalk. During catalysis, ATP synthesis in the catalytic domain of F(1) is coupled via a rotary mechanism of the central stalk subunits to proton translocation. Its function is as follows. Component of the F(0) channel, it forms part of the peripheral stalk, linking F(1) to F(0). This is ATP synthase subunit b from Malacoplasma penetrans (strain HF-2) (Mycoplasma penetrans).